We begin with the raw amino-acid sequence, 91 residues long: Elongation factor 1-beta (91 aa).

Belongs to the EF-1-beta/EF-1-delta family.

Its function is as follows. Promotes the exchange of GDP for GTP in EF-1-alpha/GDP, thus allowing the regeneration of EF-1-alpha/GTP that could then be used to form the ternary complex EF-1-alpha/GTP/AAtRNA. In Pyrococcus furiosus (strain ATCC 43587 / DSM 3638 / JCM 8422 / Vc1), this protein is Elongation factor 1-beta.